The chain runs to 468 residues: Dihydrolipoyl dehydrogenase (468 aa).

Residues 39–47 (EKGNLGGVC), Lys-56, and Ala-119 each bind FAD. Cys-47 and Cys-52 are disulfide-bonded. Residues 183–187 (GGGYI), Glu-206, and 271–274 (TVGR) each bind NAD(+). FAD-binding residues include Asp-314 and Ala-322. His-446 acts as the Proton acceptor in catalysis.

Belongs to the class-I pyridine nucleotide-disulfide oxidoreductase family. In terms of assembly, homodimer. The cofactor is FAD.

The protein localises to the cytoplasm. Its subcellular location is the membrane. It carries out the reaction N(6)-[(R)-dihydrolipoyl]-L-lysyl-[protein] + NAD(+) = N(6)-[(R)-lipoyl]-L-lysyl-[protein] + NADH + H(+). In terms of biological role, lipoamide dehydrogenase is a component of the alpha-ketoacid dehydrogenase complexes. The protein is Dihydrolipoyl dehydrogenase (pdhD) of Staphylococcus aureus (strain COL).